The sequence spans 1274 residues: ABC multidrug transporter E (1274 aa).

Asn-48 carries N-linked (GlcNAc...) asparagine glycosylation. Residues 120 to 344 (FCFRVTGLRV…IASPLIIVSK (225 aa)) form the ABC transmembrane type-1 1 domain. Helical transmembrane passes span 183-203 (LALL…LTLV), 205-225 (SSAL…MTKI), 280-300 (IFGI…SLAF), and 321-341 (VFFS…PLII). Residues 377 to 629 (IIFRDVRFTY…EGGVYRDLVN (253 aa)) enclose the ABC transporter 1 domain. Residue 412–419 (GPSGSGKS) participates in ATP binding. N-linked (GlcNAc...) asparagine glycosylation is found at Asn-473 and Asn-580. 2 consecutive transmembrane segments (helical) span residues 697–717 (VAVL…SWLF) and 737–757 (FWAL…STVG). Residues 697–984 (VAVLISTAGA…FFSFASNFAQ (288 aa)) enclose the ABC transmembrane type-1 2 domain. The N-linked (GlcNAc...) asparagine glycan is linked to Asn-792. The next 3 membrane-spanning stretches (helical) occupy residues 818–838 (FPLI…SFGW), 840–860 (LSLV…FMRI), and 924–944 (LIFA…FWYG). The 247-residue stretch at 1023–1269 (VEFHDVSFRY…KGTYWQMVSS (247 aa)) folds into the ABC transporter 2 domain. Residue Asn-1044 is glycosylated (N-linked (GlcNAc...) asparagine). 1057–1064 (GPSGCGKT) is a binding site for ATP. The N-linked (GlcNAc...) asparagine glycan is linked to Asn-1117.

It belongs to the ABC transporter superfamily. ABCB family. Multidrug resistance exporter (TC 3.A.1.201) subfamily.

It localises to the cell membrane. Its function is as follows. Pleiotropic ABC efflux transporter that may be involved in A.fumigatus adaptation to azoles such as vorizonazole. The chain is ABC multidrug transporter E from Aspergillus fumigatus (strain ATCC MYA-4609 / CBS 101355 / FGSC A1100 / Af293) (Neosartorya fumigata).